Reading from the N-terminus, the 464-residue chain is tRNA modification GTPase MnmE (464 aa).

R25, E87, and K130 together coordinate (6S)-5-formyl-5,6,7,8-tetrahydrofolate. The TrmE-type G domain maps to 226–386 (GLSVVLAGQP…LRAELLRIAG (161 aa)). N236 contributes to the K(+) binding site. Residues 236 to 241 (NVGKSS), 255 to 261 (TPIAGTT), and 280 to 283 (DTAG) contribute to the GTP site. Position 240 (S240) interacts with Mg(2+). 3 residues coordinate K(+): T255, I257, and T260. T261 provides a ligand contact to Mg(2+). K464 contributes to the (6S)-5-formyl-5,6,7,8-tetrahydrofolate binding site.

This sequence belongs to the TRAFAC class TrmE-Era-EngA-EngB-Septin-like GTPase superfamily. TrmE GTPase family. As to quaternary structure, homodimer. Heterotetramer of two MnmE and two MnmG subunits. K(+) serves as cofactor.

The protein resides in the cytoplasm. In terms of biological role, exhibits a very high intrinsic GTPase hydrolysis rate. Involved in the addition of a carboxymethylaminomethyl (cmnm) group at the wobble position (U34) of certain tRNAs, forming tRNA-cmnm(5)s(2)U34. The sequence is that of tRNA modification GTPase MnmE from Burkholderia ambifaria (strain MC40-6).